The following is a 789-amino-acid chain: Leucine-rich repeat and fibronectin type-III domain-containing protein 2 (789 aa).

A signal peptide spans 1–20; the sequence is METLLGGLLAFGMAFAVVDA. One can recognise an LRRNT domain in the interval 21-52; the sequence is CPKYCVCQNLSESLGTLCPSKGLLFVPPDIDR. The Extracellular portion of the chain corresponds to 21 to 534; it reads CPKYCVCQNL…MHSQILGGTM (514 aa). N29 carries N-linked (GlcNAc...) asparagine glycosylation. LRR repeat units lie at residues 53–74, 77–98, 101–122, 125–146, 150–171, 174–195, and 198–219; these read RTVE…DFAN, GLVD…SFLD, SLRS…TLRG, NLQH…AFED, TLED…SVRR, NLHQ…TFAD, and KLAR…PIFA. Positions 242-288 constitute an LRRCT domain; the sequence is NPLHCNCELLWLRRLERDDDLETCGSPGGLKGRYFWHVREEEFVCEP. The Ig-like domain occupies 289 to 375; the sequence is PLITQHTHKL…GEATAMVEVS (87 aa). Residues C310 and C359 are joined by a disulfide bond. N332, N341, and N384 each carry an N-linked (GlcNAc...) asparagine glycan. Positions 383 to 424 are disordered; it reads SNSTSRTAPPKSRLSDITGSSKTSRGGGGSGGGEPPKSPPER. A compositionally biased stretch (gly residues) spans 407 to 416; it reads RGGGGSGGGE. In terms of domain architecture, Fibronectin type-III spans 421–518; sequence PPERAVLVSE…GCAQFFTKAD (98 aa). A helical transmembrane segment spans residues 535–555; it reads ILVIGGIIVATLLVFIVILMV. Topologically, residues 556–789 are cytoplasmic; that stretch reads RYKVCNHEAP…SSEWVMESTV (234 aa). Disordered regions lie at residues 577 to 602, 619 to 654, and 668 to 702; these read SQTN…PPKV, SDSS…PSLD, and QRKE…LGPP. Residues 583 to 599 show a composition bias toward pro residues; that stretch reads QPPPPSSAPAGAPPQGP. A compositionally biased stretch (low complexity) spans 619–638; that stretch reads SDSSSSSSLGSGEAAGLGRA. Over residues 641–650 the composition is skewed to pro residues; it reads RIPPSAPRPK. The PDZ-binding signature appears at 786 to 789; that stretch reads ESTV.

The protein belongs to the LRFN family. Forms heteromeric complexes with LRFN1, LRFN3, LRFN4 and LRFN5. Can form homomeric complexes, but not across cell junctions. Directly interacts with 2 NMDA receptor subunits GRIN1 and GRIN2A. Interacts with DLG1, DLG2, DLG3 and DLG4. Glycosylated.

The protein localises to the membrane. Its subcellular location is the synapse. It localises to the postsynaptic cell membrane. In terms of biological role, promotes neurite outgrowth in hippocampal neurons. Enhances the cell surface expression of 2 NMDA receptor subunits GRIN1 and GRIN2A. May play a role in redistributing DLG4 to the cell periphery. The sequence is that of Leucine-rich repeat and fibronectin type-III domain-containing protein 2 (LRFN2) from Homo sapiens (Human).